We begin with the raw amino-acid sequence, 130 residues long: MSESYDRGLVADFGRWTEFSAGMWAWVFHKFTGWVLVGYLFTHISVLSTSLQGAQVYNSTLSGLESLAIVRLLEVGLLAVAVFHILNGIRLLFVDLGVGLEAQDKSFYASLVLTGVIVVASVPTFLTGAF.

Topologically, residues 1–25 (MSESYDRGLVADFGRWTEFSAGMWA) are cytoplasmic. Residues 26 to 46 (WVFHKFTGWVLVGYLFTHISV) form a helical membrane-spanning segment. Over 47–71 (LSTSLQGAQVYNSTLSGLESLAIVR) the chain is Periplasmic. A helical transmembrane segment spans residues 72 to 93 (LLEVGLLAVAVFHILNGIRLLF). H84 is a heme binding site. Residues 94–103 (VDLGVGLEAQ) lie on the Cytoplasmic side of the membrane. A helical membrane pass occupies residues 104–128 (DKSFYASLVLTGVIVVASVPTFLTG).

As to quaternary structure, part of an enzyme complex containing four subunits: a flavoprotein, an iron-sulfur protein, plus two membrane-anchoring proteins, SdhC and SdhD. The cofactor is heme.

Its subcellular location is the cell membrane. Its pathway is carbohydrate metabolism; tricarboxylic acid cycle. Membrane-anchoring subunit of succinate dehydrogenase (SDH). In Halobacterium salinarum (strain ATCC 700922 / JCM 11081 / NRC-1) (Halobacterium halobium), this protein is Succinate dehydrogenase hydrophobic membrane anchor subunit (sdhD).